A 1849-amino-acid chain; its full sequence is Immunoglobulin A1 protease autotransporter (1849 aa).

An N-terminal signal peptide occupies residues 1-25 (MLNKKFKLNFIALTVAYALTPYTEA). In terms of domain architecture, Peptidase S6 spans 26–343 (ALVRDDVDYQ…NIYKHEFAEK (318 aa)). Ser299 is a catalytic residue. The interval 998–1538 (VEKRNQTVDT…EPVELPTENA (541 aa)) is disordered. A compositionally biased stretch (polar residues) spans 1004-1015 (TVDTTNITTPND). Low complexity predominate over residues 1066–1077 (EETNTANSTETA). Polar residues-rich tracts occupy residues 1079 to 1097 (KSDT…VPSE) and 1138 to 1151 (VEAN…TQSE). A compositionally biased stretch (basic and acidic residues) spans 1152 to 1166 (GKTEETQTAETKSEP). Residues 1167–1184 (TESVTVSENQPEKTVSQS) are compositionally biased toward polar residues. Residues 1185–1205 (TEDKVVVEKEEKAKVETEETQ) show a composition bias toward basic and acidic residues. Positions 1237 to 1268 (ALQQTQPTTVAAAETTSPNSKPAEETQQPSEK) are enriched in polar residues. Basic and acidic residues predominate over residues 1291–1301 (ETAKVEKEKTQ). Low complexity-rich tracts occupy residues 1314–1330 (QEQP…PQAE), 1345–1361 (PQPQ…VPTT), and 1369–1381 (KPAA…AKPQ). Residues 1388-1437 (NVSTVNTKEPQSQTSATVSTEQPAKETSSNVEQPAPENSINTGSATTMTE) are compositionally biased toward polar residues. Positions 1438–1457 (TAEKSDKPQMETVTENDRQP) are enriched in basic and acidic residues. Over residues 1493–1513 (EETTVASTQETTVDNSVSTPK) the composition is skewed to low complexity. Residues 1597–1849 (NNEGQYNVWI…TAEVKLSFSF (253 aa)) enclose the Autotransporter domain.

The protein resides in the periplasm. Its subcellular location is the secreted. It localises to the cell surface. The protein localises to the cell outer membrane. The enzyme catalyses Cleavage of immunoglobulin A molecules at certain Pro-|-Xaa bonds in the hinge region. No small molecule substrates are known.. In terms of biological role, virulence factor; cleaves host immunoglobulin A producing intact Fc and Fab fragments. In Haemophilus influenzae, this protein is Immunoglobulin A1 protease autotransporter (iga).